The primary structure comprises 43 residues: Antimicrobial protein PcfHb (43 aa).

In terms of assembly, possible monomer. In terms of tissue distribution, expressed in mucus-secreting tissues.

The protein localises to the secreted. Functionally, shows antimicrobial activity against M.luteus (MIC=4 uM) and E.coli (MIC=12 uM), as well as against the yeast C.tropicalis (MIC=4 uM). Shows a pro-inflammatory effect, since the topical application of the protein induces an increase of cellular recruitment characterized by an increase in the number of leukocyte rolling. Does not show hemolytic activity on human erythrocytes (at doses up to 100 uM). This is Antimicrobial protein PcfHb from Potamotrygon cf. henlei (Freshwater stingray).